Here is a 365-residue protein sequence, read N- to C-terminus: DNA replication and repair protein RecF (365 aa).

Residue 30–37 (GLNAQGKT) coordinates ATP.

It belongs to the RecF family.

The protein resides in the cytoplasm. Functionally, the RecF protein is involved in DNA metabolism; it is required for DNA replication and normal SOS inducibility. RecF binds preferentially to single-stranded, linear DNA. It also seems to bind ATP. The protein is DNA replication and repair protein RecF of Chlamydia trachomatis serovar L2b (strain UCH-1/proctitis).